Consider the following 512-residue polypeptide: FACT complex subunit pob3 (512 aa).

Positions Leu-460 to Gly-504 are enriched in acidic residues. The interval Leu-460–Glu-512 is disordered.

The protein belongs to the SSRP1 family. As to quaternary structure, forms a stable heterodimer with spt16. The spt16-pob3 dimer weakly associates with multiple molecules of nhp6 to form the FACT complex. Interacts with abo1.

Its subcellular location is the nucleus. The protein localises to the chromosome. Component of the FACT complex, a general chromatin factor that acts to reorganize nucleosomes. The FACT complex is involved in multiple processes that require DNA as a template such as mRNA elongation, DNA replication and DNA repair. During transcription elongation the FACT complex acts as a histone chaperone that both destabilizes and restores nucleosomal structure. It facilitates the passage of RNA polymerase II and transcription by promoting the dissociation of one histone H2A-H2B dimer from the nucleosome, then subsequently promotes the reestablishment of the nucleosome following the passage of RNA polymerase II. The protein is FACT complex subunit pob3 of Schizosaccharomyces pombe (strain 972 / ATCC 24843) (Fission yeast).